A 159-amino-acid polypeptide reads, in one-letter code: Putative polyketide cyclase (159 aa).

It to polyketide cyclases.

In terms of biological role, involved in developmentally regulated synthesis of a compound biosynthetically related to polyketide antibiotics which is essential for spore color in Streptomyces coelicolor. This Streptomyces coelicolor (strain ATCC BAA-471 / A3(2) / M145) protein is Putative polyketide cyclase.